Here is a 279-residue protein sequence, read N- to C-terminus: MPVKNLKPFNASSRGAVLVDYSELWRGSPEKKLLLPKKSCSGRNNAGRITVRHRGGRGKVRYRLISFSRFSSGAPLFTKAVVERIEYDPNRTAFIALVRDFKTGLPSYIIAPEGLKKSDVLSTDVFDDMAPGACMPLGKVPLGTTVHNVELKPGAGGQLVRSAGSSARVIARDGNYTLVTLPSGEKRLILSTCHATIGAVSNADRKNTKLGKAGRSRWLGRRPSVRGVAMNPVDHPMGGGEGKTSGGRHPVSPWGFPTKGKKTRDPNKLSSKFIKSKKR.

The interval 227–279 (GVAMNPVDHPMGGGEGKTSGGRHPVSPWGFPTKGKKTRDPNKLSSKFIKSKKR) is disordered.

The protein belongs to the universal ribosomal protein uL2 family. In terms of assembly, part of the 50S ribosomal subunit. Forms a bridge to the 30S subunit in the 70S ribosome.

In terms of biological role, one of the primary rRNA binding proteins. Required for association of the 30S and 50S subunits to form the 70S ribosome, for tRNA binding and peptide bond formation. It has been suggested to have peptidyltransferase activity; this is somewhat controversial. Makes several contacts with the 16S rRNA in the 70S ribosome. This Neorickettsia sennetsu (strain ATCC VR-367 / Miyayama) (Ehrlichia sennetsu) protein is Large ribosomal subunit protein uL2.